We begin with the raw amino-acid sequence, 242 residues long: Demethylmenaquinone methyltransferase (242 aa).

Residues threonine 74 and aspartate 93 each coordinate S-adenosyl-L-methionine.

The protein belongs to the class I-like SAM-binding methyltransferase superfamily. MenG/UbiE family.

It carries out the reaction a 2-demethylmenaquinol + S-adenosyl-L-methionine = a menaquinol + S-adenosyl-L-homocysteine + H(+). Its pathway is quinol/quinone metabolism; menaquinone biosynthesis; menaquinol from 1,4-dihydroxy-2-naphthoate: step 2/2. Its function is as follows. Methyltransferase required for the conversion of demethylmenaquinol (DMKH2) to menaquinol (MKH2). In Chlorobaculum tepidum (strain ATCC 49652 / DSM 12025 / NBRC 103806 / TLS) (Chlorobium tepidum), this protein is Demethylmenaquinone methyltransferase.